A 264-amino-acid polypeptide reads, in one-letter code: Putative hydro-lyase Cgl2544/cg2803 (264 aa).

This sequence belongs to the D-glutamate cyclase family.

In Corynebacterium glutamicum (strain ATCC 13032 / DSM 20300 / JCM 1318 / BCRC 11384 / CCUG 27702 / LMG 3730 / NBRC 12168 / NCIMB 10025 / NRRL B-2784 / 534), this protein is Putative hydro-lyase Cgl2544/cg2803.